We begin with the raw amino-acid sequence, 669 residues long: GTP-binding protein 1 (669 aa).

A disordered region spans residues 1-32 (MAAERSRSPVDSPVPASMFAPEPSSPGAARAA). Phosphoserine is present on residues Ser6, Ser8, Ser12, Ser24, Ser25, Ser44, Ser47, and Ser69. The region spanning 158–389 (FLEVRVAVVG…LNLLSPRTSY (232 aa)) is the tr-type G domain. The tract at residues 167 to 174 (GNVDAGKS) is G1. Residue 167-174 (GNVDAGKS) participates in GTP binding. The G2 stretch occupies residues 206-210 (GRTSS). A G3 region spans residues 252–255 (DLAG). GTP is bound by residues 252–256 (DLAGH) and 308–311 (TKID). A G4 region spans residues 308–311 (TKID). Residues 366-368 (SNV) form a G5 region. 2 stretches are compositionally biased toward polar residues: residues 573–595 (LLQTTNNSPMNSKPQQIKMQSTK) and 620–637 (DEASSLGTTQAATSSGLQ). The disordered stretch occupies residues 573–669 (LLQTTNNSPM…GACVTPASGC (97 aa)). The residue at position 580 (Ser580) is a Phosphoserine. Basic residues predominate over residues 646–657 (GRRRGGQRHKVK).

It belongs to the TRAFAC class translation factor GTPase superfamily. Classic translation factor GTPase family. GTPBP1 subfamily. Interacts with EXOSC2/RRP4, EXOSC3/RRP40, EXOSC5/RRP46, HNRNPD, HNRNPR and SYNCRIP. Identified in a complex with HNRNPD, HNRNPL, HNRNPQ, HNRNPR, HNRNPU and AANAT mRNA, but does not bind mRNA by itself. As to expression, detected in pineal gland (at protein level).

The protein resides in the cytoplasm. In terms of biological role, promotes degradation of target mRNA species. Plays a role in the regulation of circadian mRNA stability. Binds GTP and has GTPase activity. This is GTP-binding protein 1 (Gtpbp1) from Rattus norvegicus (Rat).